The following is a 335-amino-acid chain: Dihydroorotate dehydrogenase (quinone) (335 aa).

FMN-binding positions include 58-62 (AGADK) and Thr-82. Residue Lys-62 participates in substrate binding. 107-111 (NRNGF) contacts substrate. FMN is bound by residues Asn-135 and Asn-168. Asn-168 is a substrate binding site. Ser-171 (nucleophile) is an active-site residue. Asn-173 contacts substrate. Lys-213 and Gly-241 together coordinate FMN. 242–243 (NT) is a substrate binding site. FMN contacts are provided by residues Gly-264, Gly-293, and 314-315 (YS).

It belongs to the dihydroorotate dehydrogenase family. Type 2 subfamily. In terms of assembly, monomer. FMN serves as cofactor.

It localises to the cell membrane. The enzyme catalyses (S)-dihydroorotate + a quinone = orotate + a quinol. It functions in the pathway pyrimidine metabolism; UMP biosynthesis via de novo pathway; orotate from (S)-dihydroorotate (quinone route): step 1/1. Catalyzes the conversion of dihydroorotate to orotate with quinone as electron acceptor. This chain is Dihydroorotate dehydrogenase (quinone), found in Haemophilus ducreyi (strain 35000HP / ATCC 700724).